The chain runs to 117 residues: uncharacterized protein (117 aa).

The next 2 membrane-spanning stretches (helical) occupy residues 9 to 29 and 56 to 76; these read ITSH…FIPF and VIIV…FFIP.

The protein localises to the membrane. This is an uncharacterized protein from Saccharomyces cerevisiae (strain ATCC 204508 / S288c) (Baker's yeast).